The chain runs to 574 residues: ATP synthase subunit beta, mitochondrial (574 aa).

Residues 1 to 26 (MLSSVRLAALRAGKTNSVFQAVRAFA) constitute a mitochondrion transit peptide. 183–190 (GGAGVGKT) serves as a coordination point for ATP.

This sequence belongs to the ATPase alpha/beta chains family. As to quaternary structure, F-type ATPases have 2 components, CF(1) - the catalytic core - and CF(0) - the membrane proton channel. CF(1) has five subunits: alpha(3), beta(3), gamma(1), delta(1), epsilon(1). CF(0) has three main subunits: a, b and c.

The protein localises to the mitochondrion. It is found in the mitochondrion inner membrane. It catalyses the reaction ATP + H2O + 4 H(+)(in) = ADP + phosphate + 5 H(+)(out). In terms of biological role, mitochondrial membrane ATP synthase (F(1)F(0) ATP synthase or Complex V) produces ATP from ADP in the presence of a proton gradient across the membrane which is generated by electron transport complexes of the respiratory chain. F-type ATPases consist of two structural domains, F(1) - containing the extramembraneous catalytic core, and F(0) - containing the membrane proton channel, linked together by a central stalk and a peripheral stalk. During catalysis, ATP synthesis in the catalytic domain of F(1) is coupled via a rotary mechanism of the central stalk subunits to proton translocation. Subunits alpha and beta form the catalytic core in F(1). Rotation of the central stalk against the surrounding alpha(3)beta(3) subunits leads to hydrolysis of ATP in three separate catalytic sites on the beta subunits. This is ATP synthase subunit beta, mitochondrial (ATP2) from Chlamydomonas reinhardtii (Chlamydomonas smithii).